We begin with the raw amino-acid sequence, 267 residues long: Glucosamine-6-phosphate deaminase (267 aa).

The Proton acceptor; for enolization step role is filled by D72. D141 serves as the catalytic For ring-opening step. H143 functions as the Proton acceptor; for ring-opening step in the catalytic mechanism. E148 serves as the catalytic For ring-opening step.

The protein belongs to the glucosamine/galactosamine-6-phosphate isomerase family. NagB subfamily. In terms of assembly, homohexamer.

It carries out the reaction alpha-D-glucosamine 6-phosphate + H2O = beta-D-fructose 6-phosphate + NH4(+). The protein operates within amino-sugar metabolism; N-acetylneuraminate degradation; D-fructose 6-phosphate from N-acetylneuraminate: step 5/5. Its activity is regulated as follows. Allosterically activated by N-acetylglucosamine 6-phosphate (GlcNAc6P). Its function is as follows. Catalyzes the reversible isomerization-deamination of glucosamine 6-phosphate (GlcN6P) to form fructose 6-phosphate (Fru6P) and ammonium ion. This is Glucosamine-6-phosphate deaminase from Actinobacillus pleuropneumoniae serotype 5b (strain L20).